The following is a 1082-amino-acid chain: Inner tegument protein (1082 aa).

The interaction with large tegument protein stretch occupies residues 604–1082 (DHIDCLFNIS…QQDLIAPLTF (479 aa)).

This sequence belongs to the herpesviridae inner tegument protein family. In terms of assembly, interacts (via C-terminus) with the large tegument protein/LTP (via N-terminus).

The protein localises to the virion tegument. It is found in the host cytoplasm. It localises to the host nucleus. Its subcellular location is the host Golgi apparatus. The protein resides in the host trans-Golgi network. Functionally, plays an essential role in cytoplasmic secondary envelopment during viral egress. Interacts with the capsid via the large tegument protein/LTP and participates in its transport to the host trans-Golgi network (TGN) where secondary envelopment occurs. Modulates tegumentation and capsid accumulation at the viral assembly complex. The protein is Inner tegument protein (U30) of Homo sapiens (Human).